A 469-amino-acid polypeptide reads, in one-letter code: GDP-fucose protein O-fucosyltransferase 3 (469 aa).

The Cytoplasmic segment spans residues 1–9; sequence MVNRIWEKR. Residues 10–30 form a helical; Signal-anchor for type II membrane protein membrane-spanning segment; that stretch reads FWISCFFIIFLFILVIFQVMV. The Lumenal portion of the chain corresponds to 31 to 469; sequence ELGRFEKKET…EFWNLVFKFW (439 aa). N100, N158, N308, and N333 each carry an N-linked (GlcNAc...) asparagine glycan. A disulfide bridge links C379 with C382. A glycan (N-linked (GlcNAc...) asparagine) is linked at N455.

The protein belongs to the glycosyltransferase 10 family.

Its subcellular location is the endoplasmic reticulum membrane. The catalysed reaction is L-threonyl-[protein] + GDP-beta-L-fucose = 3-O-(alpha-L-fucosyl)-L-threonyl-[protein] + GDP + H(+). It carries out the reaction L-seryl-[protein] + GDP-beta-L-fucose = 3-O-(alpha-L-fucosyl)-L-seryl-[protein] + GDP + H(+). It participates in protein modification; protein glycosylation. In terms of biological role, protein O-fucosyltransferase that specifically catalyzes O-fucosylation of serine or threonine residues in EMI domains of target proteins. Attaches fucose through an O-glycosidic linkage. O-fucosylation of EMI domain-containing proteins may be required for facilitating protein folding and secretion. The protein is GDP-fucose protein O-fucosyltransferase 3 (fut10) of Xenopus laevis (African clawed frog).